Consider the following 445-residue polypeptide: Transcription activator AFTR-1 (445 aa).

A DNA-binding region (zn(2)-C6 fungal-type) is located at residues 17 to 44; the sequence is CDFCTQSKLRCNKNKPSCRRCTLQQQPC. Positions 50–89 are disordered; sequence RRTGRPPKHPRKANDCQEANGQHGDQDPVTSTPGGSYQQQ. A compositionally biased stretch (basic residues) spans 51-60; it reads RTGRPPKHPR. Positions 77–89 are enriched in polar residues; it reads PVTSTPGGSYQQQ.

The protein localises to the nucleus. Transcription factor that regulates the expression of the gene clusters that mediate the biosynthesis of the host-selective toxins (HSTs) AF-toxins responsible for Alternaria black spot of strawberry disease by the strawberry pathotype. On cellular level, AF-toxins affect plasma membrane of susceptible cells and cause a sudden increase in loss of K(+) after a few minutes of toxin treatment. This is Transcription activator AFTR-1 from Alternaria alternata (Alternaria rot fungus).